The sequence spans 65 residues: uncharacterized protein (65 aa).

Cysteine 9 serves as the catalytic Nucleophile. Residue arginine 15 is part of the active site.

This sequence belongs to the low molecular weight phosphotyrosine protein phosphatase family.

This is an uncharacterized protein from Synechococcus sp. (strain WH8020).